Reading from the N-terminus, the 219-residue chain is uncharacterized protein (219 aa).

3 stretches are compositionally biased toward basic and acidic residues: residues 1–20, 30–39, and 156–170; these read METP…ESLR, AGRELVELRV, and QEVR…ELQR. A disordered region spans residues 1–195; the sequence is METPIEREIR…PSLTASRGDG (195 aa).

It belongs to the MISP family.

This is an uncharacterized protein from Homo sapiens (Human).